The primary structure comprises 306 residues: Heterogeneous nuclear ribonucleoproteins C1/C2 (306 aa).

Position 2 is an N-acetylalanine (alanine 2). Glycyl lysine isopeptide (Lys-Gly) (interchain with G-Cter in SUMO2) cross-links involve residues lysine 8, lysine 50, lysine 89, and lysine 94. The RRM domain occupies 16-87 (SRVFIGNLNT…QVLDINLAAE (72 aa)). Residues serine 107 and valine 108 each carry the phosphoserine modification. Threonine 109 is modified (phosphothreonine). 3 positions are modified to phosphoserine: serine 113, serine 115, and serine 121. 2 disordered regions span residues 139–190 (YPAR…KLKG) and 221–306 (QSKQ…EDDS). Residues 155 to 161 (PSKRQRV) carry the Nuclear localization signal motif. 2 positions are modified to phosphoserine: serine 162 and serine 166. Residues 175 to 185 (SKSGQRGSSKS) show a composition bias toward low complexity. Lysine 176 carries the post-translational modification N6-acetyllysine; alternate. Residue lysine 176 forms a Glycyl lysine isopeptide (Lys-Gly) (interchain with G-Cter in SUMO2); alternate linkage. The stretch at 190–238 (GDDLQAIKKELTQIKQKVDSLLENLEKIEKEQSKQAVEMKNDKSEEEQS) forms a coiled coil. The span at 221 to 232 (QSKQAVEMKNDK) shows a compositional bias: basic and acidic residues. Residues lysine 223 and lysine 229 each participate in a glycyl lysine isopeptide (Lys-Gly) (interchain with G-Cter in SUMO2) cross-link. Lysine 232 participates in a covalent cross-link: Glycyl lysine isopeptide (Lys-Gly) (interchain with G-Cter in SUMO2); alternate. Residue lysine 232 forms a Glycyl lysine isopeptide (Lys-Gly) (interchain with G-Cter in SUMO1); alternate linkage. Phosphoserine occurs at positions 233, 238, 239, and 241. A compositionally biased stretch (basic and acidic residues) spans 242–253 (VKKDETNVKMES). Glycyl lysine isopeptide (Lys-Gly) (interchain with G-Cter in SUMO2) cross-links involve residues lysine 243 and lysine 244. Lysine 250 participates in a covalent cross-link: Glycyl lysine isopeptide (Lys-Gly) (interchain with G-Cter in SUMO2); alternate. Residue lysine 250 forms a Glycyl lysine isopeptide (Lys-Gly) (interchain with G-Cter in SUMO); alternate linkage. Serine 253 and serine 260 each carry phosphoserine. Residues 255–276 (GGADDSAEEGDLLDDDDNEDRG) are compositionally biased toward acidic residues. Positions 277–287 (DDQLELIKDDE) are enriched in basic and acidic residues. Residues 288–306 (KEAEEGEDDRDSANGEDDS) show a composition bias toward acidic residues. Residues serine 299 and serine 306 each carry the phosphoserine modification.

Belongs to the RRM HNRPC family. RALY subfamily. Tetramer composed of 3 copies of isoform C1 and 1 copy of isoform C2. Assembly of 3 tetramers with bound pre-mRNA gives rise to a 19S complex that interacts with HNRNPA2B1 tetramers. Component of the 40S hnRNP particle. Identified in the spliceosome C complex. Interacts with IGF2BP1. Interacts with DHX9; this interaction is direct, enhanced probably by their concomitant binding to RNA and mediates the attachment to actin filaments. Interacts with PPIA/CYPA. Interacts with YWHAE. In terms of processing, phosphorylated on Ser-260 and Ser-299 in resting cells. Phosphorylated on Ser-253 and on 1 serine residue in the poly-Ser stretch at position 238 in response to hydrogen peroxide. Sumoylated. Sumoylation reduces affinity for mRNA. Post-translationally, ubiquitinated and degraded after nucleo-cytoplasmic transport by YWHAE.

Its subcellular location is the nucleus. Binds pre-mRNA and nucleates the assembly of 40S hnRNP particles. Interacts with poly-U tracts in the 3'-UTR or 5'-UTR of mRNA and modulates the stability and the level of translation of bound mRNA molecules. Single HNRNPC tetramers bind 230-240 nucleotides. Trimers of HNRNPC tetramers bind 700 nucleotides. May play a role in the early steps of spliceosome assembly and pre-mRNA splicing. N6-methyladenosine (m6A) has been shown to alter the local structure in mRNAs and long non-coding RNAs (lncRNAs) via a mechanism named 'm(6)A-switch', facilitating binding of HNRNPC, leading to regulation of mRNA splicing. The sequence is that of Heterogeneous nuclear ribonucleoproteins C1/C2 (HNRNPC) from Homo sapiens (Human).